A 204-amino-acid chain; its full sequence is Cytochrome c oxidase subunit 3 (204 aa).

A run of 5 helical transmembrane segments spans residues Tyr-12 to Trp-32, Gly-56 to Phe-76, Phe-101 to Ala-121, Ala-133 to Met-153, and Phe-171 to Met-191.

It belongs to the cytochrome c oxidase subunit 3 family. In terms of assembly, component of the cytochrome c oxidase (complex IV, CIV), a multisubunit enzyme composed of a catalytic core of 3 subunits and several supernumerary subunits. The complex exists as a monomer or a dimer and forms supercomplexes (SCs) in the inner mitochondrial membrane with ubiquinol-cytochrome c oxidoreductase (cytochrome b-c1 complex, complex III, CIII).

The protein resides in the mitochondrion inner membrane. It catalyses the reaction 4 Fe(II)-[cytochrome c] + O2 + 8 H(+)(in) = 4 Fe(III)-[cytochrome c] + 2 H2O + 4 H(+)(out). Its function is as follows. Component of the cytochrome c oxidase, the last enzyme in the mitochondrial electron transport chain which drives oxidative phosphorylation. The respiratory chain contains 3 multisubunit complexes succinate dehydrogenase (complex II, CII), ubiquinol-cytochrome c oxidoreductase (cytochrome b-c1 complex, complex III, CIII) and cytochrome c oxidase (complex IV, CIV), that cooperate to transfer electrons derived from NADH and succinate to molecular oxygen, creating an electrochemical gradient over the inner membrane that drives transmembrane transport and the ATP synthase. Cytochrome c oxidase is the component of the respiratory chain that catalyzes the reduction of oxygen to water. Electrons originating from reduced cytochrome c in the intermembrane space (IMS) are transferred via the dinuclear copper A center (CU(A)) of subunit 2 and heme A of subunit 1 to the active site in subunit 1, a binuclear center (BNC) formed by heme A3 and copper B (CU(B)). The BNC reduces molecular oxygen to 2 water molecules using 4 electrons from cytochrome c in the IMS and 4 protons from the mitochondrial matrix. In Enteroctopus dofleini (North Pacific giant octopus), this protein is Cytochrome c oxidase subunit 3 (COIII).